The primary structure comprises 302 residues: Pyridoxal 5'-phosphate synthase subunit PdxS (302 aa).

D-ribose 5-phosphate is bound at residue Asp32. The active-site Schiff-base intermediate with D-ribose 5-phosphate is the Lys89. Gly161 provides a ligand contact to D-ribose 5-phosphate. Arg173 contributes to the D-glyceraldehyde 3-phosphate binding site. D-ribose 5-phosphate contacts are provided by residues Gly222 and 243-244; that span reads GS. The segment at 275–302 is disordered; that stretch reads IAKNPGKGMKGQANADLDEEEQLQGRGV.

The protein belongs to the PdxS/SNZ family. In the presence of PdxT, forms a dodecamer of heterodimers.

The enzyme catalyses aldehydo-D-ribose 5-phosphate + D-glyceraldehyde 3-phosphate + L-glutamine = pyridoxal 5'-phosphate + L-glutamate + phosphate + 3 H2O + H(+). Its pathway is cofactor biosynthesis; pyridoxal 5'-phosphate biosynthesis. Its function is as follows. Catalyzes the formation of pyridoxal 5'-phosphate from ribose 5-phosphate (RBP), glyceraldehyde 3-phosphate (G3P) and ammonia. The ammonia is provided by the PdxT subunit. Can also use ribulose 5-phosphate and dihydroxyacetone phosphate as substrates, resulting from enzyme-catalyzed isomerization of RBP and G3P, respectively. The polypeptide is Pyridoxal 5'-phosphate synthase subunit PdxS (Haloarcula marismortui (strain ATCC 43049 / DSM 3752 / JCM 8966 / VKM B-1809) (Halobacterium marismortui)).